We begin with the raw amino-acid sequence, 161 residues long: Dihydrofolate reductase (161 aa).

A DHFR domain is found at 2 to 161 (KISLISAISN…YNFCFEILSR (160 aa)). Residue 6 to 8 (ISA) participates in substrate binding. Residues 7-8 (SA) and 15-20 (IGHNNK) each bind NADP(+). Aspartate 28 is a binding site for substrate. 44–47 (GRLT) is a binding site for NADP(+). Arginine 59 is a binding site for substrate. NADP(+) is bound by residues 64 to 66 (ISH) and 96 to 101 (IGGSKI). Threonine 115 is a binding site for substrate.

This sequence belongs to the dihydrofolate reductase family.

It carries out the reaction (6S)-5,6,7,8-tetrahydrofolate + NADP(+) = 7,8-dihydrofolate + NADPH + H(+). The protein operates within cofactor biosynthesis; tetrahydrofolate biosynthesis; 5,6,7,8-tetrahydrofolate from 7,8-dihydrofolate: step 1/1. Key enzyme in folate metabolism. Catalyzes an essential reaction for de novo glycine and purine synthesis, and for DNA precursor synthesis. This is Dihydrofolate reductase (folA) from Buchnera aphidicola subsp. Schizaphis graminum (strain Sg).